Reading from the N-terminus, the 339-residue chain is Tetraacyldisaccharide 4'-kinase (339 aa).

61 to 68 contributes to the ATP binding site; it reads TAGGTGKT.

The protein belongs to the LpxK family.

It carries out the reaction a lipid A disaccharide + ATP = a lipid IVA + ADP + H(+). It participates in glycolipid biosynthesis; lipid IV(A) biosynthesis; lipid IV(A) from (3R)-3-hydroxytetradecanoyl-[acyl-carrier-protein] and UDP-N-acetyl-alpha-D-glucosamine: step 6/6. Functionally, transfers the gamma-phosphate of ATP to the 4'-position of a tetraacyldisaccharide 1-phosphate intermediate (termed DS-1-P) to form tetraacyldisaccharide 1,4'-bis-phosphate (lipid IVA). This chain is Tetraacyldisaccharide 4'-kinase, found in Stenotrophomonas maltophilia (strain R551-3).